The sequence spans 174 residues: CDP-archaeol synthase (174 aa).

4 helical membrane-spanning segments follow: residues 51–71, 74–94, 112–132, and 136–156; these read LIGL…AGFI, SLLV…ALLG, MLPI…TFLL, and WLLA…IPVF.

It belongs to the CDP-archaeol synthase family. Mg(2+) is required as a cofactor.

It is found in the cell membrane. The catalysed reaction is 2,3-bis-O-(geranylgeranyl)-sn-glycerol 1-phosphate + CTP + H(+) = CDP-2,3-bis-O-(geranylgeranyl)-sn-glycerol + diphosphate. Its pathway is membrane lipid metabolism; glycerophospholipid metabolism. In terms of biological role, catalyzes the formation of CDP-2,3-bis-(O-geranylgeranyl)-sn-glycerol (CDP-archaeol) from 2,3-bis-(O-geranylgeranyl)-sn-glycerol 1-phosphate (DGGGP) and CTP. This reaction is the third ether-bond-formation step in the biosynthesis of archaeal membrane lipids. The polypeptide is CDP-archaeol synthase (Methanocella arvoryzae (strain DSM 22066 / NBRC 105507 / MRE50)).